A 437-amino-acid chain; its full sequence is Epsilon-sarcoglycan (437 aa).

Topologically, residues 1 to 317 are extracellular; sequence MLLFWWWELG…LKSRDYYTDF (317 aa). Asn200 carries N-linked (GlcNAc...) asparagine glycosylation. The helical transmembrane segment at 318-338 threads the bilayer; that stretch reads LVTLAVPSAVALVLFLILAYI. The Cytoplasmic segment spans residues 339–437; it reads MCCRREGVEK…QQQTTGKWYP (99 aa).

The protein belongs to the sarcoglycan alpha/epsilon family. In terms of processing, N-glycosylated. Ubiquitinated, leading to its degradation by the proteasome. In terms of tissue distribution, in both neural tissues including cerebellar cortex, striatum, cerebral cortex, thalamus and hippocampus, and non-neural tissues including quadriceps muscle, liver, kidney, spleen, lung, testis and heart. Widely distributed in the brain, with a robust signal obtained from regions with dense neuronal packing such as the pyramidal cell layer of the hippocampus, cerebellar molecular layer, and cerebral cortex. Levels are highest in kidney, moderate in brain and lung, and low in skeletal muscle, liver, spleen and testis.

The protein resides in the cell membrane. Its subcellular location is the sarcolemma. It is found in the cytoplasm. It localises to the cytoskeleton. The protein localises to the cell projection. The protein resides in the dendrite. Its subcellular location is the golgi apparatus. Functionally, component of the sarcoglycan complex, a subcomplex of the dystrophin-glycoprotein complex which forms a link between the F-actin cytoskeleton and the extracellular matrix. This Rattus norvegicus (Rat) protein is Epsilon-sarcoglycan.